The chain runs to 932 residues: Receptor-like protein 9a (932 aa).

A signal peptide spans 1-28 (MLIFTIPQFFFAAWVMVVSLQMQGYISC). The Extracellular segment spans residues 29–888 (IEKERKGLLE…DDETAIDMET (860 aa)). Residues Asn-53, Asn-80, and Asn-90 are each glycosylated (N-linked (GlcNAc...) asparagine). 28 LRR repeats span residues 97–122 (FEEL…GYKS), 126–152 (LKKL…AASS), 154–174 (RTLI…ELKD), 175–200 (LSNL…VLHK), 202–222 (HALD…GLCQ), 223–246 (LKNL…CFSS), 247–273 (LTQL…NLDS), 275–295 (EYLS…LIAN), 296–320 (LSKL…ISLQ), 322–345 (KFRL…LQQQ), 346–368 (KDLR…WFLE), 370–393 (YPKL…RLLV), 394–417 (HSLH…IGHV), 418–441 (LPNI…SFSE), 443–466 (KKIF…FCIG), 468–491 (SSLS…PMKL), 492–514 (ESLR…LIHS), 516–535 (GLVF…PSWF), 536–560 (GGFY…TLFN), 561–583 (VSFQ…HFSF), 585–605 (HMGL…STLL), 606–629 (ENVM…VSNR), 631–652 (FLYL…LCEL), 653–676 (KSIR…LNNV), 745–769 (FKFM…LGDF), 770–792 (QRIR…SFSN), 794–817 (TDIE…LTKL), and 819–842 (YIVV…KFLS). Asn-140 carries an N-linked (GlcNAc...) asparagine glycan. N-linked (GlcNAc...) asparagine glycans are attached at residues Asn-261 and Asn-295. Asn-352 and Asn-380 each carry an N-linked (GlcNAc...) asparagine glycan. 3 N-linked (GlcNAc...) asparagine glycosylation sites follow: Asn-420, Asn-425, and Asn-454. 3 N-linked (GlcNAc...) asparagine glycosylation sites follow: Asn-524, Asn-551, and Asn-560. Residues Asn-666 and Asn-675 are each glycosylated (N-linked (GlcNAc...) asparagine). N-linked (GlcNAc...) asparagine glycosylation is found at Asn-776 and Asn-792. Asn-824, Asn-829, Asn-860, and Asn-866 each carry an N-linked (GlcNAc...) asparagine glycan. Residues 889-909 (FYWSLFATYGITWMAFIVFLC) form a helical membrane-spanning segment. Residues 910–932 (FDSPWRQAWFRLVNVFVSFLKCV) are Cytoplasmic-facing.

Belongs to the RLP family.

The protein resides in the cell membrane. The sequence is that of Receptor-like protein 9a from Arabidopsis thaliana (Mouse-ear cress).